Consider the following 237-residue polypeptide: Golgi to ER traffic protein 1 (237 aa).

Residues 1–4 (MDSG) lie on the Lumenal side of the membrane. A helical transmembrane segment spans residues 5 to 24 (GWIVYCCIFFILLGKVLEYT). The Cytoplasmic segment spans residues 25-110 (SSYQDKWFTK…SSKKVFGRVK (86 aa)). Residues 40–99 (EARKLNSQYHELLSERLRLQEENHSISAQDNYARWTKNNRKLGELDKKLGTIRDKLQETN) adopt a coiled-coil conformation. Residues 111–131 (LIGLTIPFWILKIWQRSHVVY) form a helical membrane-spanning segment. Residues 132-176 (HFPKQDLFPKLVTGVWARGWLYLALGPLQYLRNGSLNIQDYAPHG) are Lumenal-facing. The chain crosses the membrane as a helical span at residues 177-193 (VSLGIWIWALQATINTL). Topologically, residues 194 to 237 (EFLVKQVILEKPVSPPPQKSKSATKAETKRPEKLEITDDKVELD) are cytoplasmic. The tract at residues 205–237 (PVSPPPQKSKSATKAETKRPEKLEITDDKVELD) is disordered. A compositionally biased stretch (basic and acidic residues) spans 217-237 (TKAETKRPEKLEITDDKVELD).

The protein belongs to the WRB/GET1 family. In terms of assembly, component of the Golgi to ER traffic (GET) complex, which is composed of GET1, GET2 and GET3. Within the complex, GET1 and GET2 form a heterotetramer which is stabilized by phosphatidylinositol binding and which binds to the GET3 homodimer.

It is found in the endoplasmic reticulum membrane. The protein localises to the golgi apparatus membrane. Its function is as follows. Required for the post-translational delivery of tail-anchored (TA) proteins to the endoplasmic reticulum. Together with GET2, acts as a membrane receptor for soluble GET3, which recognizes and selectively binds the transmembrane domain of TA proteins in the cytosol. The GET complex cooperates with the HDEL receptor ERD2 to mediate the ATP-dependent retrieval of resident ER proteins that contain a C-terminal H-D-E-L retention signal from the Golgi to the ER. The sequence is that of Golgi to ER traffic protein 1 from Zygosaccharomyces rouxii (strain ATCC 2623 / CBS 732 / NBRC 1130 / NCYC 568 / NRRL Y-229).